A 269-amino-acid polypeptide reads, in one-letter code: GATA zinc finger domain-containing protein 1 (269 aa).

A GATA-type zinc finger spans residues 9–33; it reads CSVCKTTSSSMWKKGAQGEILCHHC. A disordered region spans residues 63 to 115; that stretch reads ATFASTSATPPQSNGGGGGKQSKQEIHRRSARLRNTKYKSAPAAEKKVSTKGK. K262 is covalently cross-linked (Glycyl lysine isopeptide (Lys-Gly) (interchain with G-Cter in SUMO2)).

Component of a chromatin complex, at least composed of KDM5A, GATAD1 and EMSY. Ubiquitously expressed among various tissue types. Expressed in left ventricular myocytes.

It localises to the nucleus. Component of some chromatin complex recruited to chromatin sites methylated 'Lys-4' of histone H3 (H3K4me), with a preference for trimethylated form (H3K4me3). The chain is GATA zinc finger domain-containing protein 1 (GATAD1) from Homo sapiens (Human).